The following is a 210-amino-acid chain: Acyl-homoserine-lactone synthase (210 aa).

Belongs to the autoinducer synthase family.

It catalyses the reaction a fatty acyl-[ACP] + S-adenosyl-L-methionine = an N-acyl-L-homoserine lactone + S-methyl-5'-thioadenosine + holo-[ACP] + H(+). Required for the synthesis of OHHL (N-(3-oxohexanoyl)-L-homoserine lactone), an autoinducer molecule which binds to EsaR. OHHL is necessary for biosynthesis of EPS virulence factor (extracellular heteropolysaccharide) which plays a role in the development of Stewart's wilt on sweet corn. This Pantoea stewartii subsp. stewartii (Erwinia stewartii) protein is Acyl-homoserine-lactone synthase (esaI).